A 730-amino-acid polypeptide reads, in one-letter code: Synaptogenesis protein syg-1 (730 aa).

The N-terminal stretch at 1-18 (MVRWQTWPLLLLFQLVTC) is a signal peptide. Residues 19–551 (QQLQQRIVEA…WIVITAKFDR (533 aa)) are Extracellular-facing. Ig-like domains lie at 23-123 (QRIV…AKLT), 131-265 (PKIV…VKLS), 270-352 (PQIN…IKLN), 357-433 (ARIM…QILS), and 441-540 (PPTV…RNIL). Disulfide bonds link Cys44–Cys104, Cys152–Cys246, Cys292–Cys336, Cys378–Cys420, and Cys462–Cys519. N-linked (GlcNAc...) asparagine glycosylation is found at Asn93 and Asn206. Residues 552–572 (MVALAIISAGVLLVSLLCCLC) traverse the membrane as a helical segment. Residues 573-730 (MCRSNCRSRK…RPISRTSTHV (158 aa)) are Cytoplasmic-facing.

The protein belongs to the immunoglobulin superfamily. Interacts with skr-1. Interacts with syg-2. Interacts with the WAVE regulatory complex; the interaction leads to formation of a synaptic F-actin network that is required for synapse formation and axon branching. In terms of tissue distribution, expression in head motor neurons, occasionally in HSN neurons and weakly in other cells in the vulval region. Expressed in the primary synapse region of HSNL motor neuron.

It localises to the cell membrane. The protein localises to the cell projection. The protein resides in the axon. Its subcellular location is the synapse. Functionally, cell adhesion protein. Involved in synapse formation in the HSNL egg-laying motor neuron. Inhibits assembly of the SCF(sel-10) E3 ubiquitin ligase complex at synapses, and protects them from elimination. Also required for F-actin assembly at the synaptic region and for axon branch formation. This chain is Synaptogenesis protein syg-1, found in Caenorhabditis elegans.